Here is a 406-residue protein sequence, read N- to C-terminus: Isocitrate dehydrogenase [NADP] (406 aa).

NADP(+) contacts are provided by lysine 72, threonine 75, threonine 77, and arginine 82. The D-threo-isocitrate site is built by serine 94, asparagine 96, arginine 100, glutamate 110, and arginine 132. The Mn(2+) site is built by aspartate 250, aspartate 273, and aspartate 277. The NADP(+) site is built by glycine 308, threonine 309, valine 310, histidine 313, and asparagine 326.

Belongs to the isocitrate and isopropylmalate dehydrogenases family. Homodimer. Mg(2+) is required as a cofactor. It depends on Mn(2+) as a cofactor.

The catalysed reaction is D-threo-isocitrate + NADP(+) = 2-oxoglutarate + CO2 + NADPH. Its function is as follows. Catalyzes the oxidative decarboxylation of isocitrate to 2-oxoglutarate and carbon dioxide with the concomitant reduction of NADP(+). This is Isocitrate dehydrogenase [NADP] (icd) from Sphingobium yanoikuyae (Sphingomonas yanoikuyae).